We begin with the raw amino-acid sequence, 113 residues long: Class I hydrophobin fvh1 (113 aa).

Positions 1-20 (MVSFRAFTVAASLFATLAAA) are cleaved as a signal peptide. Intrachain disulfides connect cysteine 34–cysteine 94, cysteine 41–cysteine 88, cysteine 42–cysteine 75, and cysteine 95–cysteine 108. N-linked (GlcNAc...) asparagine glycosylation is present at asparagine 35. A glycan (N-linked (GlcNAc...) asparagine) is linked at asparagine 97.

It belongs to the fungal hydrophobin family. As to quaternary structure, self-assembles to form functional amyloid fibrils called rodlets. Self-assembly into fibrillar rodlets occurs spontaneously at hydrophobic:hydrophilic interfaces and the rodlets further associate laterally to form amphipathic monolayers.

It is found in the secreted. The protein localises to the cell wall. Functionally, aerial growth, conidiation, and dispersal of filamentous fungi in the environment rely upon a capability of their secreting small amphipathic proteins called hydrophobins (HPBs) with low sequence identity. Class I can self-assemble into an outermost layer of rodlet bundles on aerial cell surfaces, conferring cellular hydrophobicity that supports fungal growth, development and dispersal; whereas Class II form highly ordered films at water-air interfaces through intermolecular interactions but contribute nothing to the rodlet structure. Fvh1 is a class I hydrophobin involved in fruiting body initiation. The sequence is that of Class I hydrophobin fvh1 from Flammulina velutipes (Agaricus velutipes).